A 141-amino-acid polypeptide reads, in one-letter code: Putative pre-16S rRNA nuclease (141 aa).

It belongs to the YqgF nuclease family.

It is found in the cytoplasm. Functionally, could be a nuclease involved in processing of the 5'-end of pre-16S rRNA. The protein is Putative pre-16S rRNA nuclease of Shewanella denitrificans (strain OS217 / ATCC BAA-1090 / DSM 15013).